The sequence spans 169 residues: Ribonuclease H (169 aa).

An RNase H type-1 domain is found at 3-159 (AHAALTLYTD…CDRLATDAAR (157 aa)). Residues aspartate 12, glutamate 63, aspartate 87, and aspartate 151 each coordinate Mg(2+).

It belongs to the RNase H family. In terms of assembly, monomer. It depends on Mg(2+) as a cofactor.

The protein resides in the cytoplasm. It carries out the reaction Endonucleolytic cleavage to 5'-phosphomonoester.. Its function is as follows. Endonuclease that specifically degrades the RNA of RNA-DNA hybrids. The protein is Ribonuclease H of Treponema pallidum subsp. pallidum (strain SS14).